The primary structure comprises 261 residues: Hydroxyethylthiazole kinase (261 aa).

Methionine 38 provides a ligand contact to substrate. Arginine 114 and threonine 159 together coordinate ATP. Glycine 186 is a binding site for substrate.

Belongs to the Thz kinase family. Mg(2+) is required as a cofactor.

The enzyme catalyses 5-(2-hydroxyethyl)-4-methylthiazole + ATP = 4-methyl-5-(2-phosphooxyethyl)-thiazole + ADP + H(+). The protein operates within cofactor biosynthesis; thiamine diphosphate biosynthesis; 4-methyl-5-(2-phosphoethyl)-thiazole from 5-(2-hydroxyethyl)-4-methylthiazole: step 1/1. Catalyzes the phosphorylation of the hydroxyl group of 4-methyl-5-beta-hydroxyethylthiazole (THZ). This chain is Hydroxyethylthiazole kinase, found in Halalkalibacterium halodurans (strain ATCC BAA-125 / DSM 18197 / FERM 7344 / JCM 9153 / C-125) (Bacillus halodurans).